Reading from the N-terminus, the 305-residue chain is Peroxisome biogenesis factor 2 (305 aa).

Residues 1–15 (MASRKENAKSANRVL) lie on the Peroxisomal matrix side of the membrane. The helical transmembrane segment at 16-42 (RISQLDALELNKALEQLVWSQFTQCFH) threads the bilayer. Topologically, residues 43–48 (GFKPGL) are cytoplasmic. Residues 49-74 (LARFEPEVKACLWVFLWRFTIYSKNA) form a helical membrane-spanning segment. Residues 75–98 (TVGQSVLNIKYKNDFSPNLRYQPP) lie on the Peroxisomal matrix side of the membrane. Lys84 bears the N6-acetyllysine mark. A helical transmembrane segment spans residues 99 to 125 (SKNQKIWYAVCTIGGRWLEERCYDLFR). Topologically, residues 126-133 (NHHLASFG) are cytoplasmic. A helical membrane pass occupies residues 134–160 (KVKQCVNFVIGLLKLGGLINFLIFLQR). The Peroxisomal matrix portion of the chain corresponds to 161 to 187 (GKFATLTERLLGIHSVFCKPQNICEVG). The chain crosses the membrane as a helical span at residues 188–211 (FEYMNRELLWHGFAEFLIFLLPLI). Residues 212–305 (NVQKLKAKLS…GIEMSEVNAL (94 aa)) are Cytoplasmic-facing. Residues Cys244, Cys247, Cys259, His261, Cys264, Cys267, Cys280, and Cys283 each coordinate Zn(2+). Residues 244–284 (CALCGEWPTMPHTIGCEHIFCYFCAKSSFLFDVYFTCPKCG) form an RING-type zinc finger.

This sequence belongs to the pex2/pex10/pex12 family. As to quaternary structure, component of the PEX2-PEX10-PEX12 retrotranslocation channel, composed of PEX2, PEX10 and PEX12. Forms intramolecular and intermolecular disulfide bonds in response to reactive oxygen species (ROS), promoting higher stability.

The protein localises to the peroxisome membrane. The catalysed reaction is [E2 ubiquitin-conjugating enzyme]-S-ubiquitinyl-L-cysteine + [acceptor protein]-L-cysteine = [E2 ubiquitin-conjugating enzyme]-L-cysteine + [acceptor protein]-S-ubiquitinyl-L-cysteine.. It carries out the reaction S-ubiquitinyl-[E2 ubiquitin-conjugating enzyme]-L-cysteine + [acceptor protein]-L-lysine = [E2 ubiquitin-conjugating enzyme]-L-cysteine + N(6)-ubiquitinyl-[acceptor protein]-L-lysine.. Its pathway is protein modification; protein ubiquitination. Its function is as follows. E3 ubiquitin-protein ligase component of a retrotranslocation channel required for peroxisome organization by mediating export of the PEX5 receptor from peroxisomes to the cytosol, thereby promoting PEX5 recycling. The retrotranslocation channel is composed of PEX2, PEX10 and PEX12; each subunit contributing transmembrane segments that coassemble into an open channel that specifically allows the passage of PEX5 through the peroxisomal membrane. PEX2 also regulates peroxisome organization by acting as a E3 ubiquitin-protein ligase. PEX2 ubiquitinates PEX5 during its passage through the retrotranslocation channel: catalyzes monoubiquitination of PEX5 at 'Cys-11', a modification that acts as a signal for PEX5 extraction into the cytosol. Required for pexophagy in response to starvation by mediating ubiquitination of peroxisomal proteins, such as PEX5 and ABCD3/PMP70. Also involved in the response to reactive oxygen species (ROS) by mediating 'Lys-48'-linked polyubiquitination and subsequent degradation of PNPLA2/ATGL, thereby regulating lipolysis. The chain is Peroxisome biogenesis factor 2 from Homo sapiens (Human).